Here is a 674-residue protein sequence, read N- to C-terminus: 1,4-alpha-glucan branching enzyme GlgB 1 (674 aa).

Residue Asp336 is the Nucleophile of the active site. Residue Glu389 is the Proton donor of the active site.

It belongs to the glycosyl hydrolase 13 family. GlgB subfamily. Monomer.

It catalyses the reaction Transfers a segment of a (1-&gt;4)-alpha-D-glucan chain to a primary hydroxy group in a similar glucan chain.. Its pathway is glycan biosynthesis; glycogen biosynthesis. In terms of biological role, catalyzes the formation of the alpha-1,6-glucosidic linkages in glycogen by scission of a 1,4-alpha-linked oligosaccharide from growing alpha-1,4-glucan chains and the subsequent attachment of the oligosaccharide to the alpha-1,6 position. This chain is 1,4-alpha-glucan branching enzyme GlgB 1 (glgB1), found in Clostridium perfringens (strain 13 / Type A).